We begin with the raw amino-acid sequence, 351 residues long: sn-glycerol-3-phosphate import ATP-binding protein UgpC (351 aa).

In terms of domain architecture, ABC transporter spans 4–235 (IVLDNVRKSY…PASTFVATFI (232 aa)). 37 to 44 (GPSGCGKS) lines the ATP pocket.

The protein belongs to the ABC transporter superfamily. sn-glycerol-3-phosphate importer (TC 3.A.1.1.3) family. In terms of assembly, the complex is composed of two ATP-binding proteins (UgpC), two transmembrane proteins (UgpA and UgpE) and a solute-binding protein (UgpB).

Its subcellular location is the cell inner membrane. The catalysed reaction is sn-glycerol 3-phosphate(out) + ATP + H2O = sn-glycerol 3-phosphate(in) + ADP + phosphate + H(+). Functionally, part of the ABC transporter complex UgpBAEC involved in sn-glycerol-3-phosphate (G3P) import. Responsible for energy coupling to the transport system. The protein is sn-glycerol-3-phosphate import ATP-binding protein UgpC of Brucella abortus (strain 2308).